Consider the following 137-residue polypeptide: Ig heavy chain V region MOPC 315 (137 aa).

The signal sequence occupies residues 1 to 18 (MKVLSLLYLLTAIPGIMS). A framework-1 region spans residues 19-48 (DVQLQESGPGLVKPSQSLSLTCSVTGYSIT). A disulfide bridge links Cys40 with Cys114. The tract at residues 49-54 (SGYFWN) is complementarity-determining-1. Residues 55–68 (WIRQFPGNKLEWLG) are framework-2. Positions 69–84 (FIKYDGSNGYNPSLKN) are complementarity-determining-2. The tract at residues 85-116 (RVSITRDTSENQFFLKLNSVTTEDTATYYCAG) is framework-3. The segment at 117–126 (DNDHLYYFDY) is complementarity-determining-3. Residues 127–137 (WGQGTTLTVSS) form a framework-4 region.

In Mus musculus (Mouse), this protein is Ig heavy chain V region MOPC 315.